Here is a 77-residue protein sequence, read N- to C-terminus: Acyl carrier protein (77 aa).

Residues 2–77 form the Carrier domain; that stretch reads SNIEERVKKI…AAIDYVSKNQ (76 aa). Serine 37 is subject to O-(pantetheine 4'-phosphoryl)serine.

It belongs to the acyl carrier protein (ACP) family. 4'-phosphopantetheine is transferred from CoA to a specific serine of apo-ACP by AcpS. This modification is essential for activity because fatty acids are bound in thioester linkage to the sulfhydryl of the prosthetic group.

The protein localises to the cytoplasm. Its pathway is lipid metabolism; fatty acid biosynthesis. Functionally, carrier of the growing fatty acid chain in fatty acid biosynthesis. The chain is Acyl carrier protein from Shewanella denitrificans (strain OS217 / ATCC BAA-1090 / DSM 15013).